Here is a 206-residue protein sequence, read N- to C-terminus: Na(+)-translocating NADH-quinone reductase subunit E (206 aa).

6 helical membrane-spanning segments follow: residues 12-32 (AVFVENMALAFFLGMCTFLAV), 36-56 (ISSAIGLGIAVVVVLTITVPV), 85-105 (FLGLLSYIGVIAALVQILEMF), 118-138 (GVFLPLITVNCAILGASLFMV), 148-168 (VIYGAGAGVGWALAITALAGI), and 184-204 (LGITFITVGLMSLGFMSFSGI).

The protein belongs to the NqrDE/RnfAE family. Composed of six subunits; NqrA, NqrB, NqrC, NqrD, NqrE and NqrF.

The protein localises to the cell inner membrane. It carries out the reaction a ubiquinone + n Na(+)(in) + NADH + H(+) = a ubiquinol + n Na(+)(out) + NAD(+). Its function is as follows. NQR complex catalyzes the reduction of ubiquinone-1 to ubiquinol by two successive reactions, coupled with the transport of Na(+) ions from the cytoplasm to the periplasm. NqrA to NqrE are probably involved in the second step, the conversion of ubisemiquinone to ubiquinol. The protein is Na(+)-translocating NADH-quinone reductase subunit E of Chromohalobacter salexigens (strain ATCC BAA-138 / DSM 3043 / CIP 106854 / NCIMB 13768 / 1H11).